Consider the following 293-residue polypeptide: MMRIALFLLTNLAVMVVFGLVLSLTGIQSSSVQGLLIMALLFGFGGSFISLLMSKWMALKSVGGEVIEQPRNDMEHWLMNTVAQQSRQAGIKMPQVAIYHAPDINAFATGARRDASLVAVSTGLLQNMSRDEAEAVIAHEISHIANGDMVTMTLIQGVVNTFVIFISRILAQIAAGFMGGNRDEGEGNNGNPLIYFAVAMVLELVFGILASIITMWFSRHREFHADAGSAKLVGREKMIAALQRLKTSYEPQEATSMMAFCINGKSKSLSEMFMTHPPLDKRIEALRSGQYIK.

2 helical membrane-spanning segments follow: residues 4 to 24 (IALF…VLSL) and 34 to 54 (GLLI…LLMS). Histidine 139 contributes to the Zn(2+) binding site. Glutamate 140 is an active-site residue. Residue histidine 143 coordinates Zn(2+). 2 helical membrane-spanning segments follow: residues 158 to 178 (VVNT…AGFM) and 193 to 213 (LIYF…ASII). Glutamate 222 is a binding site for Zn(2+).

It belongs to the peptidase M48B family. Requires Zn(2+) as cofactor.

The protein localises to the cell inner membrane. In Enterobacter sp. (strain 638), this protein is Protease HtpX.